A 345-amino-acid chain; its full sequence is Low-density lipoprotein receptor class A domain-containing protein 3 (345 aa).

Residues 1-17 form the signal peptide; the sequence is MWLLGPLCLLLSSAAES. Residues 18–173 are Extracellular-facing; it reads QLLPGNNFTN…NQLVYYPSIT (156 aa). The N-linked (GlcNAc...) asparagine glycan is linked to Asn-24. LDL-receptor class A domains are found at residues 28–65, 70–107, and 112–148; these read ECNIPGNFMCSNGRCIPGAWQCDGLPDCFDKSDEKECP, KCGPTFFPCASGIHCIIGRFRCNGFEDCPDGSDEENCT, and LCSTARYHCKNGLCIDKSFICDGQNNCQDNSDEESCE. 9 disulfide bridges follow: Cys-29/Cys-42, Cys-37/Cys-55, Cys-49/Cys-64, Cys-71/Cys-84, Cys-78/Cys-97, Cys-91/Cys-106, Cys-113/Cys-125, Cys-120/Cys-138, and Cys-132/Cys-147. The segment at 30–57 is (Microbial infection) Interaction with Venezuelan equine encephalitis virus/VEEV spike proteins E1 and E2; sequence NIPGNFMCSNGRCIPGAWQCDGLPDCFD. A helical membrane pass occupies residues 174–194; it reads YAIIGSSVIFVLVVALLALVL. Topologically, residues 195–345 are cytoplasmic; sequence HHQRKRNNLM…SEPSQGTEEV (151 aa). 2 short sequence motifs (involved in ITCH interaction) span residues 256 to 259 and 275 to 278; these read PPSY and PPPY. Residues 270 to 345 form a disordered region; the sequence is WYDLPPPPYS…SEPSQGTEEV (76 aa). Positions 295-313 are enriched in low complexity; it reads SRSGSANSASSQAASSLLS.

It belongs to the LDLR family. As to quaternary structure, interacts with APP precursor C-terminus. Interacts directly with ITCH; this interaction promotes ITCH auto-ubiquitination leading to its degradation. Interacts directly with NEDD4; this interaction promotes NEDD4 auto-ubiquitination. Interacts directly with NEDD4L. (Microbial infection) Interacts (via domain LDL-receptor class A 1) with Venezuelan equine encephalitis virus/VEEV spike proteins E1 and E2. Expressed at high levels in brain, lung, skeletal muscle, and pancreas. Expressed at moderate levels in heart, placenta, and kidney but not detected in the liver.

The protein localises to the cell membrane. In terms of biological role, may influence APP processing, resulting in a decrease in sAPP-alpha production and increased amyloidogenic P3 peptide production. May regulate ITCH and NEDD4 E3 ligase activity and degradation. Its function is as follows. (Microbial infection) Acts as a receptor for Venezuelan equine encephalitis virus. This Homo sapiens (Human) protein is Low-density lipoprotein receptor class A domain-containing protein 3.